Here is a 145-residue protein sequence, read N- to C-terminus: MSDFENFFRTDIVPEELSIDSLSFVGDAVYSLYFRIKTLRSAKRRTGYQHNLTLLYVEAKGQRKALEVIEKFLSEEERIIVRRGYNSRGARKRGDDENYKCATALEALVGYLFLKGRYRRLEELLEKVENDVSSWKKCAERDSKT.

The active site involves aspartate 27.

This sequence belongs to the MrnC RNase family. As to quaternary structure, homodimer. Mg(2+) is required as a cofactor.

The protein localises to the cytoplasm. Involved in correct processing of both the 5' and 3' ends of 23S rRNA precursor. Processes 30S rRNA precursor transcript even in absence of ribonuclease 3 (Rnc); Rnc processes 30S rRNA into smaller rRNA precursors. The chain is Mini-ribonuclease 3 from Kosmotoga olearia (strain ATCC BAA-1733 / DSM 21960 / TBF 19.5.1).